The sequence spans 721 residues: Polyribonucleotide nucleotidyltransferase (721 aa).

Mg(2+) contacts are provided by Asp495 and Asp501. A KH domain is found at 562-621 (PRLLSFRIDPELIGTVIGPGGRTIKGITERTNTKIDIEDGGIVTIASHDGAAAEEAQKII). The region spanning 631–699 (GEIFPGVVTR…SRGRINLTLR (69 aa)) is the S1 motif domain. Residues 702 to 721 (GQNGGMSYPEPTPTPVAPLS) form a disordered region. A compositionally biased stretch (pro residues) spans 711-721 (EPTPTPVAPLS).

Belongs to the polyribonucleotide nucleotidyltransferase family. The cofactor is Mg(2+).

It is found in the cytoplasm. It carries out the reaction RNA(n+1) + phosphate = RNA(n) + a ribonucleoside 5'-diphosphate. Functionally, involved in mRNA degradation. Catalyzes the phosphorolysis of single-stranded polyribonucleotides processively in the 3'- to 5'-direction. This chain is Polyribonucleotide nucleotidyltransferase, found in Prochlorococcus marinus (strain MIT 9301).